A 144-amino-acid chain; its full sequence is Cytochrome c-type biogenesis protein CcmE (144 aa).

The Cytoplasmic portion of the chain corresponds to 1-7 (MTRKQKR). Residues 8 to 28 (LAVIGSGMGFLALAAALTFYA) form a helical; Signal-anchor for type II membrane protein membrane-spanning segment. Residues 29 to 144 (LGQQTSYFYM…LKKDGLWQEQ (116 aa)) lie on the Periplasmic side of the membrane. Residues histidine 122 and tyrosine 126 each contribute to the heme site.

The protein belongs to the CcmE/CycJ family.

The protein localises to the cell inner membrane. Heme chaperone required for the biogenesis of c-type cytochromes. Transiently binds heme delivered by CcmC and transfers the heme to apo-cytochromes in a process facilitated by CcmF and CcmH. The polypeptide is Cytochrome c-type biogenesis protein CcmE (Chelativorans sp. (strain BNC1)).